The following is a 268-amino-acid chain: Holocytochrome c-type synthase (268 aa).

Residues 1–22 (MGLSPSAPAVAVQASNASASPP) are compositionally biased toward low complexity. The tract at residues 1–25 (MGLSPSAPAVAVQASNASASPPSGC) is disordered. Gly-2 carries the N-myristoyl glycine lipid modification. HRM repeat units lie at residues 24–29 (GCPMHE) and 34–39 (GCPVNT).

Belongs to the cytochrome c-type heme lyase family.

It localises to the mitochondrion inner membrane. The protein localises to the membrane. It catalyses the reaction holo-[cytochrome c] = apo-[cytochrome c] + heme b. Lyase that catalyzes the covalent linking of the heme group to the cytochrome C apoprotein to produce the mature functional cytochrome. This chain is Holocytochrome c-type synthase, found in Homo sapiens (Human).